The sequence spans 218 residues: Glutathione S-transferase Mu 2 (218 aa).

Residues proline 2–glycine 88 enclose the GST N-terminal domain. Tyrosine 7–tryptophan 8 is a binding site for glutathione. Phosphoserine is present on residues serine 27 and serine 44. Glutathione contacts are provided by residues arginine 43–tryptophan 46, lysine 50, asparagine 59–leucine 60, and glutamine 72–serine 73. The GST C-terminal domain maps to threonine 90–isoleucine 208. Tyrosine 116 is a binding site for substrate. Position 117 is a phosphoserine (serine 117).

Belongs to the GST superfamily. Mu family. In terms of assembly, homodimer.

It localises to the cytoplasm. The catalysed reaction is RX + glutathione = an S-substituted glutathione + a halide anion + H(+). It carries out the reaction 11(S)-hydroxy-14(S),15(S)-epoxy-(5Z,8Z,12E)-eicosatrienoate + glutathione = (11S,15S)-dihydroxy-14(R)-S-glutathionyl-(5Z,8Z,12E)-eicosatrienoate. Functionally, conjugation of reduced glutathione to a wide number of exogenous and endogenous hydrophobic electrophiles. Participates in the formation of novel hepoxilin regioisomers. The sequence is that of Glutathione S-transferase Mu 2 from Mus musculus (Mouse).